The primary structure comprises 154 residues: Snaclec agglucetin subunit alpha-1 (154 aa).

The N-terminal stretch at 1–23 (MGRFIFVSFGLLVVFLSLSGTGA) is a signal peptide. Cystine bridges form between cysteine 27–cysteine 38, cysteine 55–cysteine 150, and cysteine 125–cysteine 142. Residues 34 to 151 (YDQSCYRVFK…CGSEYAFVCK (118 aa)) enclose the C-type lectin domain. An N-linked (GlcNAc...) asparagine glycan is attached at asparagine 116.

The protein belongs to the snaclec family. In terms of assembly, heterotetramer of the subunits alpha-1, alpha-2, beta-1 and beta-2; disulfide-linked. In terms of tissue distribution, expressed by the venom gland.

The protein resides in the secreted. Its function is as follows. Agglucetin specifically causes platelet aggregation and surface exposure of integrin alpha-IIb/beta-3 with a GPIb-(GP1BA-) dependent manner in washed platelets. It binds to human platelets in a saturable manner, and its binding is specifically blocked by anti-GP Ib mAb. It regulates endothelial cell survival and promotes angiogenesis by activating integrin alpha-v/beta-3 signaling through FAK/phosphatidylinositol 3-kinase (PI3K)/Akt pathway. This Deinagkistrodon acutus (Hundred-pace snake) protein is Snaclec agglucetin subunit alpha-1.